A 201-amino-acid chain; its full sequence is Large ribosomal subunit protein uL4 (201 aa).

A disordered region spans residues 42–67; sequence GNSAQKTRSEVSGGGKKPWNQKGTGR.

This sequence belongs to the universal ribosomal protein uL4 family. In terms of assembly, part of the 50S ribosomal subunit.

Its function is as follows. One of the primary rRNA binding proteins, this protein initially binds near the 5'-end of the 23S rRNA. It is important during the early stages of 50S assembly. It makes multiple contacts with different domains of the 23S rRNA in the assembled 50S subunit and ribosome. Functionally, forms part of the polypeptide exit tunnel. The protein is Large ribosomal subunit protein uL4 of Legionella pneumophila (strain Lens).